We begin with the raw amino-acid sequence, 246 residues long: Pyridoxine 5'-phosphate synthase (246 aa).

Residues Asn-8 and Arg-19 each coordinate 3-amino-2-oxopropyl phosphate. The active-site Proton acceptor is the His-44. 1-deoxy-D-xylulose 5-phosphate is bound by residues Arg-46 and His-51. Glu-76 functions as the Proton acceptor in the catalytic mechanism. Thr-106 is a 1-deoxy-D-xylulose 5-phosphate binding site. The active-site Proton donor is the His-198. Residues Asp-199 and 221-222 contribute to the 3-amino-2-oxopropyl phosphate site; that span reads GH.

It belongs to the PNP synthase family. Homooctamer; tetramer of dimers.

The protein resides in the cytoplasm. It carries out the reaction 3-amino-2-oxopropyl phosphate + 1-deoxy-D-xylulose 5-phosphate = pyridoxine 5'-phosphate + phosphate + 2 H2O + H(+). The protein operates within cofactor biosynthesis; pyridoxine 5'-phosphate biosynthesis; pyridoxine 5'-phosphate from D-erythrose 4-phosphate: step 5/5. Its function is as follows. Catalyzes the complicated ring closure reaction between the two acyclic compounds 1-deoxy-D-xylulose-5-phosphate (DXP) and 3-amino-2-oxopropyl phosphate (1-amino-acetone-3-phosphate or AAP) to form pyridoxine 5'-phosphate (PNP) and inorganic phosphate. This is Pyridoxine 5'-phosphate synthase from Brucella suis (strain ATCC 23445 / NCTC 10510).